Here is an 816-residue protein sequence, read N- to C-terminus: Protein kinase C-binding protein NELL2 (816 aa).

An N-terminal signal peptide occupies residues 1-21 (MESRVLLRTFCLIFGLGAVWG). 4 N-linked (GlcNAc...) asparagine glycosylation sites follow: Asn-53, Asn-225, Asn-293, and Asn-298. The region spanning 64–228 (PRSIKASTAT…AQCPDLNRTC (165 aa)) is the Laminin G-like domain. One can recognise a VWFC 1 domain in the interval 272–331 (RTCTMKGTTYREFESWIDGCKNCTCLNGTIQCETLICPNPDCPLKSALAYVDGKCCKECK). One can recognise an EGF-like 1 domain in the interval 397–439 (GYDFCSERHNCMENSICRNLNDRAVCSCRDGFRALREDNAYCE). 3 cysteine pairs are disulfide-bonded: Cys-401–Cys-413, Cys-407–Cys-422, and Cys-424–Cys-438. Asp-440, Ile-441, and Glu-443 together coordinate Ca(2+). Residues 440–481 (DIDECAEGRHYCRENTMCVNTPGSFMCICKTGYIRIDDYSCT) form the EGF-like 2; calcium-binding domain. Disulfide bonds link Cys-444–Cys-457, Cys-451–Cys-466, Cys-468–Cys-480, Cys-486–Cys-499, Cys-493–Cys-508, Cys-510–Cys-521, Cys-525–Cys-535, Cys-529–Cys-541, and Cys-543–Cys-552. Ca(2+) is bound by residues Asn-459, Thr-460, and Ser-463. The EGF-like 3; calcium-binding domain occupies 482 to 522 (EHDECITNQHNCDENALCFNTVGGHNCVCKPGYTGNGTTCK). Asn-517 carries an N-linked (GlcNAc...) asparagine glycan. The region spanning 523–553 (AFCKDGCRNGGACIAANVCACPQGFTGPSCE) is the EGF-like 4 domain. Thr-548 is a glycosylation site (O-linked (GlcNAc...) threonine). The Ca(2+) site is built by Asp-555, Ile-556, and Glu-558. One can recognise an EGF-like 5; calcium-binding domain in the interval 555-601 (DIDECSDGFVQCDSRANCINLPGWYHCECRDGYHDNGMFSPSGESCE). Intrachain disulfides connect Cys-559–Cys-572, Cys-566–Cys-581, and Cys-583–Cys-600. Ca(2+) contacts are provided by Asn-574, Leu-575, and Trp-578. The Ca(2+) site is built by Asp-602, Ile-603, and Glu-605. The EGF-like 6; calcium-binding domain occupies 602–637 (DIDECGTGRHSCANDTICFNLDGGYDCRCPHGKNCT). 3 disulfide bridges follow: Cys-606/Cys-619, Cys-613/Cys-628, and Cys-630/Cys-636. Asn-615 carries an N-linked (GlcNAc...) asparagine glycan. Positions 621, 622, and 625 each coordinate Ca(2+). An N-linked (GlcNAc...) asparagine glycan is attached at Asn-635. VWFC domains are found at residues 638-693 (GDCI…PECD) and 698-756 (SQCL…PRCV).

Homotrimer. Binds to PRKCB. Interacts with NICOL1; this interaction triggers epididymal differentiation. Interacts (via the EGF domains) with ROBO3 (via Fibronectin type-III 1 domain) with a 3:3 stoichiometry; this interaction promotes oligomerization of ROBO3 resulting in the repulsion of commissural axons in the midline.

It localises to the secreted. Plays multiple roles in neural tissues, regulates neuronal proliferation, survival, differentiation, polarization, as well as axon guidance and synaptic functions. Plays an important role in axon development during neuronal differentiation through the MAPK intracellular signaling pathway. Via binding to its receptor ROBO3, plays a role in axon guidance, functioning as a repulsive axon guidance cue that contributes to commissural axon guidance to the midline. Required for neuron survival through the modulation of MAPK signaling pathways too. Involved in the regulation of hypothalamic GNRH secretion and the control of puberty. Functionally, epididymal-secreted protein that signals through a ROS1-pathway to regulate the epididymal initial segment (IS) maturation, sperm maturation and male fertility. This chain is Protein kinase C-binding protein NELL2, found in Homo sapiens (Human).